Here is a 134-residue protein sequence, read N- to C-terminus: Cytochrome b5 (134 aa).

The Cytochrome b5 heme-binding domain maps to 6-82; sequence VKYFTRAEVA…MKQYKVGELV (77 aa). 2 residues coordinate heme: histidine 41 and histidine 65. The helical transmembrane segment at 111–131 threads the bilayer; sequence WLMPFVLGLVATLIYKFFFGT.

It belongs to the cytochrome b5 family.

It localises to the endoplasmic reticulum membrane. Its subcellular location is the microsome membrane. Cytochrome b5 is a membrane bound hemoprotein which function as an electron carrier for several membrane bound oxygenases. The protein is Cytochrome b5 (Cyt-b5) of Musca domestica (House fly).